The chain runs to 181 residues: dTTP/UTP pyrophosphatase (181 aa).

Residue D67 is the Proton acceptor of the active site.

This sequence belongs to the Maf family. YhdE subfamily. A divalent metal cation serves as cofactor.

The protein resides in the cytoplasm. The catalysed reaction is dTTP + H2O = dTMP + diphosphate + H(+). It catalyses the reaction UTP + H2O = UMP + diphosphate + H(+). In terms of biological role, nucleoside triphosphate pyrophosphatase that hydrolyzes dTTP and UTP. May have a dual role in cell division arrest and in preventing the incorporation of modified nucleotides into cellular nucleic acids. This is dTTP/UTP pyrophosphatase from Latilactobacillus sakei subsp. sakei (strain 23K) (Lactobacillus sakei subsp. sakei).